A 447-amino-acid polypeptide reads, in one-letter code: Methylenetetrahydrofolate--tRNA-(uracil-5-)-methyltransferase TrmFO (447 aa).

13–18 (GAGLAG) serves as a coordination point for FAD.

It belongs to the MnmG family. TrmFO subfamily. FAD serves as cofactor.

The protein resides in the cytoplasm. The enzyme catalyses uridine(54) in tRNA + (6R)-5,10-methylene-5,6,7,8-tetrahydrofolate + NADH + H(+) = 5-methyluridine(54) in tRNA + (6S)-5,6,7,8-tetrahydrofolate + NAD(+). It catalyses the reaction uridine(54) in tRNA + (6R)-5,10-methylene-5,6,7,8-tetrahydrofolate + NADPH + H(+) = 5-methyluridine(54) in tRNA + (6S)-5,6,7,8-tetrahydrofolate + NADP(+). Its function is as follows. Catalyzes the folate-dependent formation of 5-methyl-uridine at position 54 (M-5-U54) in all tRNAs. The sequence is that of Methylenetetrahydrofolate--tRNA-(uracil-5-)-methyltransferase TrmFO from Streptococcus thermophilus (strain CNRZ 1066).